Here is a 256-residue protein sequence, read N- to C-terminus: UPF0246 protein TERTU_4575 (256 aa).

The protein belongs to the UPF0246 family.

In Teredinibacter turnerae (strain ATCC 39867 / T7901), this protein is UPF0246 protein TERTU_4575.